The primary structure comprises 139 residues: AP-4 complex subunit sigma (139 aa).

Belongs to the adaptor complexes small subunit family. May be part of the adaptor protein complex 4 (AP-4), a heterotetramer composed of two large adaptins (epsilon-type subunitand beta-type subunit), a medium adaptin (mu-type subunit) and a small adaptin (sigma-type).

It is found in the golgi apparatus. The protein resides in the trans-Golgi network membrane. In terms of biological role, probable component of an adaptor protein complex. Adaptor protein complexes are vesicle coat components involved both in vesicle formation and cargo selection. They control the vesicular transport of proteins in different trafficking pathways. The sequence is that of AP-4 complex subunit sigma from Dictyostelium discoideum (Social amoeba).